The primary structure comprises 138 residues: Small ribosomal subunit protein uS8c (138 aa).

This sequence belongs to the universal ribosomal protein uS8 family. In terms of assembly, part of the 30S ribosomal subunit.

Its subcellular location is the plastid. It is found in the chloroplast. In terms of biological role, one of the primary rRNA binding proteins, it binds directly to 16S rRNA central domain where it helps coordinate assembly of the platform of the 30S subunit. The chain is Small ribosomal subunit protein uS8c (rps8) from Chlorella vulgaris (Green alga).